The chain runs to 129 residues: Glycine cleavage system H protein (129 aa).

The Lipoyl-binding domain occupies 24–106 (SYTVGITEHA…YGEGWFFRVM (83 aa)). N6-lipoyllysine is present on K65.

Belongs to the GcvH family. The glycine cleavage system is composed of four proteins: P, T, L and H. (R)-lipoate serves as cofactor.

Its function is as follows. The glycine cleavage system catalyzes the degradation of glycine. The H protein shuttles the methylamine group of glycine from the P protein to the T protein. This is Glycine cleavage system H protein from Shewanella baltica (strain OS155 / ATCC BAA-1091).